The following is a 291-amino-acid chain: Bifunctional protein FolD (291 aa).

NADP(+)-binding positions include 171-173 and Ile239; that span reads GVS.

Belongs to the tetrahydrofolate dehydrogenase/cyclohydrolase family. As to quaternary structure, homodimer.

It carries out the reaction (6R)-5,10-methylene-5,6,7,8-tetrahydrofolate + NADP(+) = (6R)-5,10-methenyltetrahydrofolate + NADPH. The enzyme catalyses (6R)-5,10-methenyltetrahydrofolate + H2O = (6R)-10-formyltetrahydrofolate + H(+). The protein operates within one-carbon metabolism; tetrahydrofolate interconversion. In terms of biological role, catalyzes the oxidation of 5,10-methylenetetrahydrofolate to 5,10-methenyltetrahydrofolate and then the hydrolysis of 5,10-methenyltetrahydrofolate to 10-formyltetrahydrofolate. The protein is Bifunctional protein FolD of Xylella fastidiosa (strain Temecula1 / ATCC 700964).